The sequence spans 1642 residues: Cobra venom factor (1642 aa).

The signal sequence occupies residues 1–22 (MERMALYLVAALLIGFPGSSHG). N-linked (GlcNAc...) asparagine glycosylation is found at N153, N158, and N209. P516, D539, V540, and D542 together coordinate Mg(2+). 12 disulfides stabilise this stretch: C544–C801, C609–C644, C677–C704, C678–C711, C691–C712, C857–C1492, C1340–C1468, C1368–C1437, C1485–C1490, C1497–C1569, C1516–C1640, and C1616–C1625. Positions 650-732 (RRRRSSVLLL…QRESELFLAR (83 aa)) are excised as a propeptide. The tract at residues 654 to 732 (SSVLLLDSNA…QRESELFLAR (79 aa)) is C3a-like domain. The region spanning 677 to 712 (CCEDVMHENPMGYTCEKRAKYIQEGDACKAAFLECC) is the Anaphylatoxin-like domain. A factor B binding site region spans residues 736-747 (EDGFIADSDIIS). The propeptide occupies 985-1263 (HLIITPSGCG…VMAFQALAEY (279 aa)). The C3d-like domain stretch occupies residues 985-1263 (HLIITPSGCG…VMAFQALAEY (279 aa)). The segment at residues 993 to 996 (CGEQ) is a cross-link (isoglutamyl cysteine thioester (Cys-Gln)). Positions 1190–1253 (VLMAASTGRD…GETYGQTQAT (64 aa)) are factor H binding site. N1346 carries N-linked (GlcNAc...) asparagine glycosylation. The region spanning 1497–1640 (CSSLNHQERI…FSYTLTEFGC (144 aa)) is the NTR domain.

Belongs to the venom complement C3 homolog family. Heterotrimer of alpha, beta and gamma chains; disulfide-linked. Is active with factor B in the presence of factor D. Post-translationally, first processed by the removal of 4 Arg residues by furin-type protease, forming two chains, alpha and gamma/beta precursor, linked by a disulfide bond. Probably, the cobrin cleaves the C3a-like domain and then the C3d-like domain, generating the mature cobra venom factor (CVF). This mature CVF is composed of three chains: alpha, gamma and beta. In terms of processing, contains 3 N-linked oligosaccharide chains, two in the alpha-chain and one in the beta-chain. Glycosylation is not required for the biological activity. However, it contributes to the immunogenicity of CVF. The carbohydrate content is 7.4. The major oligosaccharide is a symmetric fucosylated biantennary complex-type chain with an unusual alpha-galactosylated Le(x) structure at its non-reducing end. Expressed by the venom gland.

It is found in the secreted. Complement-activating protein in cobra venom. It is a structural and functional analog of complement component C3b, the activated form of C3. It binds factor B (CFB), which is subsequently cleaved by factor D (CFD) to form the bimolecular complex CVF/Bb. CVF/Bb is a C3/C5 convertase that cleaves both complement components C3 and C5. Structurally, it resembles the C3b degradation product C3c, which is not able to form a C3/C5 convertase. Unlike C3b/Bb, CVF/Bb is a stable complex and completely resistant to the actions of complement regulatory factors H (CFH) and I (CFI). Therefore, CVF continuously activates complement resulting in the depletion of complement activity. This Naja kaouthia (Monocled cobra) protein is Cobra venom factor.